The following is a 394-amino-acid chain: NAD(P)H-quinone oxidoreductase subunit H (394 aa).

Belongs to the complex I 49 kDa subunit family. NDH-1 can be composed of about 15 different subunits; different subcomplexes with different compositions have been identified which probably have different functions.

The protein localises to the cellular thylakoid membrane. The catalysed reaction is a plastoquinone + NADH + (n+1) H(+)(in) = a plastoquinol + NAD(+) + n H(+)(out). The enzyme catalyses a plastoquinone + NADPH + (n+1) H(+)(in) = a plastoquinol + NADP(+) + n H(+)(out). NDH-1 shuttles electrons from an unknown electron donor, via FMN and iron-sulfur (Fe-S) centers, to quinones in the respiratory and/or the photosynthetic chain. The immediate electron acceptor for the enzyme in this species is believed to be plastoquinone. Couples the redox reaction to proton translocation, and thus conserves the redox energy in a proton gradient. Cyanobacterial NDH-1 also plays a role in inorganic carbon-concentration. This is NAD(P)H-quinone oxidoreductase subunit H from Nostoc punctiforme (strain ATCC 29133 / PCC 73102).